The primary structure comprises 186 residues: Ribosome-recycling factor (186 aa).

Belongs to the RRF family.

It is found in the cytoplasm. Responsible for the release of ribosomes from messenger RNA at the termination of protein biosynthesis. May increase the efficiency of translation by recycling ribosomes from one round of translation to another. The sequence is that of Ribosome-recycling factor from Burkholderia lata (strain ATCC 17760 / DSM 23089 / LMG 22485 / NCIMB 9086 / R18194 / 383).